Here is a 336-residue protein sequence, read N- to C-terminus: Fructose-1,6-bisphosphatase class 1 (336 aa).

Glu-90, Asp-112, Leu-114, and Asp-115 together coordinate Mg(2+). Residues 115–118 (DGSS), Asn-211, and Lys-277 contribute to the substrate site. A Mg(2+)-binding site is contributed by Glu-283.

The protein belongs to the FBPase class 1 family. As to quaternary structure, homotetramer. The cofactor is Mg(2+).

The protein resides in the cytoplasm. It carries out the reaction beta-D-fructose 1,6-bisphosphate + H2O = beta-D-fructose 6-phosphate + phosphate. The protein operates within carbohydrate biosynthesis; gluconeogenesis. This Pseudomonas aeruginosa (strain UCBPP-PA14) protein is Fructose-1,6-bisphosphatase class 1.